The following is a 388-amino-acid chain: Succinate--CoA ligase [ADP-forming] subunit beta (388 aa).

The ATP-grasp domain maps to 9–244 (KEILRKYNVP…LDEEDANEIE (236 aa)). Residues K46, 53–55 (GRG), E99, A102, and E107 each bind ATP. Mg(2+) is bound by residues N199 and D213. Substrate-binding positions include N264 and 321–323 (GIM).

The protein belongs to the succinate/malate CoA ligase beta subunit family. As to quaternary structure, heterotetramer of two alpha and two beta subunits. It depends on Mg(2+) as a cofactor.

It catalyses the reaction succinate + ATP + CoA = succinyl-CoA + ADP + phosphate. The catalysed reaction is GTP + succinate + CoA = succinyl-CoA + GDP + phosphate. It functions in the pathway carbohydrate metabolism; tricarboxylic acid cycle; succinate from succinyl-CoA (ligase route): step 1/1. Functionally, succinyl-CoA synthetase functions in the citric acid cycle (TCA), coupling the hydrolysis of succinyl-CoA to the synthesis of either ATP or GTP and thus represents the only step of substrate-level phosphorylation in the TCA. The beta subunit provides nucleotide specificity of the enzyme and binds the substrate succinate, while the binding sites for coenzyme A and phosphate are found in the alpha subunit. The sequence is that of Succinate--CoA ligase [ADP-forming] subunit beta from Cupriavidus taiwanensis (strain DSM 17343 / BCRC 17206 / CCUG 44338 / CIP 107171 / LMG 19424 / R1) (Ralstonia taiwanensis (strain LMG 19424)).